Consider the following 55-residue polypeptide: Ferredoxin (55 aa).

4Fe-4S ferredoxin-type domains lie at 2 to 26 (YKIT…ISEG) and 27 to 55 (SIYE…VPED). Residues Cys8, Cys11, Cys14, Cys18, Cys36, Cys39, Cys42, and Cys46 each contribute to the [4Fe-4S] cluster site.

[4Fe-4S] cluster serves as cofactor.

In terms of biological role, ferredoxins are iron-sulfur proteins that transfer electrons in a wide variety of metabolic reactions. The polypeptide is Ferredoxin (Butyribacterium methylotrophicum).